A 130-amino-acid chain; its full sequence is Osteocrin (130 aa).

An N-terminal signal peptide occupies residues 1 to 25 (MLDWRLASTHFILAMIVMLWGSGKA). Residue Arg129 is modified to Arginine amide.

Belongs to the Osteocrin family. Interacts with NPR3. Expressed in skeletal muscle and to a much lesser extent in bone, brown adipose tissue, spleen and testis. Not expressed in neurons.

It is found in the secreted. Hormone that acts as a ligand for natriuretic peptide receptor NPR3/NPR-C and promotes bone growth and physical endurance in muscle. Acts as a regulator of osteoblast differentiation and bone growth by binding to natriuretic peptide receptor NPR3/NPR-C, thereby preventing binding between NPR3/NPR-C and natriuretic peptides, leading to increase cGMP production. Required to enhance physical endurance: induced following physical exercise in muscle and promotes cGMP production, probably by interacting with NPR3/NPR-C. May act as an autocrine and paracrine factor linked to glucose metabolism in skeletal muscle. This chain is Osteocrin, found in Mus musculus (Mouse).